The sequence spans 309 residues: tRNA dimethylallyltransferase (309 aa).

10–17 is an ATP binding site; sequence GPTAVGKT. A substrate-binding site is contributed by 12 to 17; that stretch reads TAVGKT. Residues 35-38 are interaction with substrate tRNA; it reads DSMQ.

Belongs to the IPP transferase family. Monomer. It depends on Mg(2+) as a cofactor.

The enzyme catalyses adenosine(37) in tRNA + dimethylallyl diphosphate = N(6)-dimethylallyladenosine(37) in tRNA + diphosphate. Its function is as follows. Catalyzes the transfer of a dimethylallyl group onto the adenine at position 37 in tRNAs that read codons beginning with uridine, leading to the formation of N6-(dimethylallyl)adenosine (i(6)A). In Clostridium botulinum (strain Eklund 17B / Type B), this protein is tRNA dimethylallyltransferase.